A 579-amino-acid chain; its full sequence is General transcription and DNA repair factor IIH subunit TFB1-3 (579 aa).

BSD domains follow at residues 107–161 (LTPA…GKDS) and 186–238 (RTNR…YLYS).

This sequence belongs to the TFB1 family. Component of the 7-subunit TFIIH core complex composed of XPB, XPD, TFB1/GTF2H1, GTF2H2/P44, TFB4/GTF2H3, TFB2/GTF2H4 and TFB5/GTF2H5, which is active in NER. The core complex associates with the 3-subunit CDK-activating kinase (CAK) module composed of CYCH1/cyclin H1, CDKD and MAT1/At4g30820 to form the 10-subunit holoenzyme (holo-TFIIH) active in transcription.

It is found in the nucleus. In terms of biological role, component of the general transcription and DNA repair factor IIH (TFIIH) core complex, which is involved in general and transcription-coupled nucleotide excision repair (NER) of damaged DNA and, when complexed to CAK, in RNA transcription by RNA polymerase II. In NER, TFIIH acts by opening DNA around the lesion to allow the excision of the damaged oligonucleotide and its replacement by a new DNA fragment. In transcription, TFIIH has an essential role in transcription initiation. When the pre-initiation complex (PIC) has been established, TFIIH is required for promoter opening and promoter escape. Phosphorylation of the C-terminal tail (CTD) of the largest subunit of RNA polymerase II by the kinase module CAK controls the initiation of transcription. The chain is General transcription and DNA repair factor IIH subunit TFB1-3 from Arabidopsis thaliana (Mouse-ear cress).